The sequence spans 107 residues: UPF0060 membrane protein RPD_3084 (107 aa).

Transmembrane regions (helical) follow at residues 5–25, 31–51, 59–79, and 85–105; these read IIYV…WGWL, VWWL…LTLV, AYAS…WSVE, and RWDV…LWGP.

It belongs to the UPF0060 family.

Its subcellular location is the cell inner membrane. This is UPF0060 membrane protein RPD_3084 from Rhodopseudomonas palustris (strain BisB5).